The primary structure comprises 557 residues: NAC domain-containing protein 17 (557 aa).

The region spanning 16-166 is the NAC domain; sequence SAPGFRFHPT…YYALYKLFKK (151 aa). A DNA-binding region spans residues 115–172; the sequence is VGLKKTLVFYRGRAPSGERTDWVMHEYTMDEDELGRCKNPQEYYALYKLFKKSGAGPK. A helical transmembrane segment spans residues 526–546; it reads FLLLSIVGALCAIFWVLVATV.

As to expression, expressed in roots, rosette leaves, cauline leaves, shoot apex, stems and flowers.

The protein resides in the endoplasmic reticulum membrane. The protein localises to the nucleus. In terms of biological role, transcriptional activator activated by proteolytic cleavage through regulated intramembrane proteolysis (RIP). Transcriptional activator that acts as a positive regulator of AOX1A during mitochondrial dysfunction. Binds directly to AOX1A promoter. Mediates mitochondrial retrograde signaling. The polypeptide is NAC domain-containing protein 17 (Arabidopsis thaliana (Mouse-ear cress)).